Consider the following 367-residue polypeptide: Alcohol dehydrogenase 2 (367 aa).

Residues Cys48, His74, Cys107, Cys110, Cys113, Cys121, and Cys163 each coordinate Zn(2+). Residues 187 to 193 (GAGGGLG), Asp212, Lys216, 286 to 288 (VGI), and Arg361 contribute to the NAD(+) site.

It belongs to the zinc-containing alcohol dehydrogenase family. As to quaternary structure, homotetramer. Zn(2+) is required as a cofactor.

Its subcellular location is the cytoplasm. The enzyme catalyses a primary alcohol + NAD(+) = an aldehyde + NADH + H(+). It catalyses the reaction a secondary alcohol + NAD(+) = a ketone + NADH + H(+). This Emericella nidulans (strain FGSC A4 / ATCC 38163 / CBS 112.46 / NRRL 194 / M139) (Aspergillus nidulans) protein is Alcohol dehydrogenase 2 (alcB).